The following is a 482-amino-acid chain: MVKRTVATNGDASGAHRAKKMSKTHASHIINAQEDYKHMYLSVQPLDIFCWGTGSMCELGLGPLAKNKEVKRPRLNPFLPRDEAKIISFAVGGMHTLALDEESNVWSWGCNDVGALGRDTSNAKEQLKDMDADDSSDDEDGDLNELESTPAKIPRESFPPLAEGHKVVQLAATDNMSCALFSNGEVYAWGTFRCNEGILGFYQDKIKIQKTPWKVPTFSKYNIVQLAPGKDHILFLDEEGMVFAWGNGQQNQLGRKVMERFRLKTLDPRPFGLRHVKYIASGENHCFALTKDNKLVSWGLNQFGQCGVSEDVEDGALVTKPKRLALPDNVVIRSIAAGEHHSLILSQDGDLYSCGRLDMFEVGIPKDNLPEYTYKDVHGKARAVPLPTKLNNVPKFKSVAAGSHHSVAVAQNGIAYSWGFGETYAVGLGPFEDDTEVPTRIKNTATQDHNIILVGCGGQFSVSGGVKLSDEDAEKRADEMDD.

Residues 1 to 11 (MVKRTVATNGD) show a composition bias toward polar residues. Positions 1–22 (MVKRTVATNGDASGAHRAKKMS) are disordered. Residues 15-26 (AHRAKKMSKTHA) carry the Nuclear localization signal motif. RCC1 repeat units follow at residues 45 to 101 (PLDI…ALDE), 103 to 152 (SNVW…TPAK), 183 to 238 (NGEV…FLDE), 239 to 291 (EGMV…ALTK), 292 to 347 (DNKL…ILSQ), 349 to 411 (GDLY…AVAQ), and 412 to 466 (NGIA…SGGV). The segment at 128–158 (KDMDADDSSDDEDGDLNELESTPAKIPRESF) is disordered. A compositionally biased stretch (acidic residues) spans 131-145 (DADDSSDDEDGDLNE). A phosphoserine mark is found at S135 and S136.

As to quaternary structure, component of a multicomponent complex composed of six to seven proteins, which has a collective molecular mass greater than 150 kDa. Interacts with GSP1 and YRB2. Phosphorylated; possibly by KSP1.

It is found in the nucleus. Its function is as follows. Guanine nucleotide exchange factor that promotes the exchange of GSP1/GSP2-bound GDP by GTP and controls RNA metabolism and transport. Involved in yeast pheromone response pathway and in mRNA metabolism. Involved in nuclear pore complex (NPC) assembly and required for mRNA and ribosome nuclear export. Binds chromatin and is involved NPC-mediated transcriptional control. In Saccharomyces cerevisiae (strain ATCC 204508 / S288c) (Baker's yeast), this protein is Guanine nucleotide exchange factor SRM1 (SRM1).